Here is a 574-residue protein sequence, read N- to C-terminus: Cyclomaltodextrinase (574 aa).

Ca(2+) is bound by residues asparagine 144, aspartate 146, asparagine 149, aspartate 150, glycine 168, and aspartate 170. Positions 243 and 323 each coordinate substrate. Aspartate 325 acts as the Nucleophile in catalysis. Residue glutamate 354 is the Proton donor of the active site. Substrate is bound by residues 420 to 421 (HD), aspartate 465, and arginine 469.

This sequence belongs to the glycosyl hydrolase 13 family. In terms of assembly, monomer. Requires Ca(2+) as cofactor.

It carries out the reaction cyclomaltodextrin + H2O = linear maltodextrin. In terms of biological role, hydrolyzes cyclodextrins. Can also act on linear maltodextrins, with the exception of maltose. In Thermoanaerobacter pseudethanolicus (strain ATCC 33223 / 39E) (Clostridium thermohydrosulfuricum), this protein is Cyclomaltodextrinase.